The following is a 169-amino-acid chain: Neurotensin/neuromedin N (169 aa).

Residues 1 to 22 (MRGMNLQLVCLTLLAFSSWSLC) form the signal peptide.

This sequence belongs to the neurotensin family. Interacts with NTSR1. Interacts with SORT1. Interacts with SORL1. Neurotensin is cleaved and degraded by Angiotensin-converting enzyme (ACE) and neprilysin (MME).

It localises to the secreted. It is found in the cytoplasmic vesicle. The protein localises to the secretory vesicle. Functionally, neurotensin may play an endocrine or paracrine role in the regulation of fat metabolism. It causes contraction of smooth muscle. This chain is Neurotensin/neuromedin N (Nts), found in Mus musculus (Mouse).